A 151-amino-acid polypeptide reads, in one-letter code: MKQIDLKILDGRIGNEFPLPAYATEGSAGLDLRALTESALTVAPGQTVLIPTGISIYIADPNLAAVILPRSGLGHKNGIVLGNLVGLIDSDYQGPLMVSLWNRSDKPFTVEVGDRIAQLVFVPVVQARFNIVNDFAQTERGEGGFGHSGKQ.

Substrate contacts are provided by residues 70–72 (RSG), Asn83, 87–89 (LID), and Met97.

It belongs to the dUTPase family. Mg(2+) is required as a cofactor.

It carries out the reaction dUTP + H2O = dUMP + diphosphate + H(+). The protein operates within pyrimidine metabolism; dUMP biosynthesis; dUMP from dCTP (dUTP route): step 2/2. Its function is as follows. This enzyme is involved in nucleotide metabolism: it produces dUMP, the immediate precursor of thymidine nucleotides and it decreases the intracellular concentration of dUTP so that uracil cannot be incorporated into DNA. This Actinobacillus pleuropneumoniae serotype 5b (strain L20) protein is Deoxyuridine 5'-triphosphate nucleotidohydrolase.